We begin with the raw amino-acid sequence, 152 residues long: Transcriptional regulator MraZ (152 aa).

2 SpoVT-AbrB domains span residues 5–52 (TSAI…PLPE) and 81–124 (ASDC…HDTA).

The protein belongs to the MraZ family. As to quaternary structure, forms oligomers.

It is found in the cytoplasm. Its subcellular location is the nucleoid. This chain is Transcriptional regulator MraZ, found in Colwellia psychrerythraea (strain 34H / ATCC BAA-681) (Vibrio psychroerythus).